A 355-amino-acid polypeptide reads, in one-letter code: Ribosomal RNA large subunit methyltransferase M (355 aa).

S-adenosyl-L-methionine is bound by residues S191, 224–227, D243, D263, and D279; that span reads APGG. K308 functions as the Proton acceptor in the catalytic mechanism.

This sequence belongs to the class I-like SAM-binding methyltransferase superfamily. RNA methyltransferase RlmE family. RlmM subfamily. In terms of assembly, monomer.

The protein localises to the cytoplasm. The enzyme catalyses cytidine(2498) in 23S rRNA + S-adenosyl-L-methionine = 2'-O-methylcytidine(2498) in 23S rRNA + S-adenosyl-L-homocysteine + H(+). Its function is as follows. Catalyzes the 2'-O-methylation at nucleotide C2498 in 23S rRNA. The sequence is that of Ribosomal RNA large subunit methyltransferase M from Stenotrophomonas maltophilia (strain K279a).